The following is a 264-amino-acid chain: Proteasome assembly chaperone 2 (264 aa).

Threonine 137 is modified (phosphothreonine).

It belongs to the PSMG2 family. As to quaternary structure, forms a heterodimer with PSMG1. The PSMG1-PSMG2 heterodimer interacts directly with the PSMA5 and PSMA7 proteasome alpha subunits. Degraded by the proteasome upon completion of 20S proteasome maturation.

The protein resides in the nucleus. Chaperone protein which promotes assembly of the 20S proteasome as part of a heterodimer with PSMG1. The PSMG1-PSMG2 heterodimer binds to the PSMA5 and PSMA7 proteasome subunits, promotes assembly of the proteasome alpha subunits into the heteroheptameric alpha ring and prevents alpha ring dimerization. In Bos taurus (Bovine), this protein is Proteasome assembly chaperone 2.